A 130-amino-acid chain; its full sequence is Small ribosomal subunit protein uS9 (130 aa).

Belongs to the universal ribosomal protein uS9 family.

This Histophilus somni (strain 129Pt) (Haemophilus somnus) protein is Small ribosomal subunit protein uS9.